The chain runs to 147 residues: MLTSMVKEHHKEQAKRKQEQEVRRKEAIEASNELTQSLVDTLNVGVAQAYLNQKRLDAEAKQLHLGATNFAKQTHQWLQLIDQFSTALKDLGDVENWARSIEGDMHTINQTLELAYKASRATQTSSGAGTSLEASTSASASANPSAT.

2 disordered regions span residues 1–25 (MLTSMVKEHHKEQAKRKQEQEVRRK) and 125–147 (SSGAGTSLEASTSASASANPSAT).

Belongs to the BLOC1S1 family. Component of the biogenesis of lysosome-related organelles complex-1 (BLOC-1) composed of Blos1, Blos2, Blos3, Blos4, Dysb, Muted, Pldn and Snapin. Interacts with Pldn.

Component of the biogenesis of lysosome-related organelles complex-1 (BLOC-1) involved in pigment granule biogenesis and membrane trafficking in synapses. In response to high synaptic activity at neuromuscular junctions, stabilizes Pldn protein levels and, together with Pldn, plays a role in promoting efficient synaptic vesicle recycling and re-formation through early endosomes. This Drosophila melanogaster (Fruit fly) protein is Biogenesis of lysosome-related organelles complex 1 subunit 1.